The chain runs to 303 residues: Coenzyme PQQ synthesis protein B (303 aa).

It belongs to the PqqB family.

It participates in cofactor biosynthesis; pyrroloquinoline quinone biosynthesis. May be involved in the transport of PQQ or its precursor to the periplasm. This Acinetobacter baumannii (strain AYE) protein is Coenzyme PQQ synthesis protein B.